The chain runs to 25 residues: Ocellatin-L1 (25 aa).

Leucine 25 is subject to Leucine amide.

It belongs to the frog skin active peptide (FSAP) family. Ocellatin subfamily. In terms of tissue distribution, expressed by the skin glands.

The protein resides in the secreted. Antimicrobial peptide with activity against Gram-negative bacteria but without activity against Gram-positive bacteria. Shows a low activity in stimulating insulin release from rat BRIN-BD11 beta cells, and acts without loss of integrity of the plasma membrane. Has very low hemolytic activity. Shows weak amphipathicity in its alpha-helical conformation. The chain is Ocellatin-L1 from Leptodactylus laticeps (Santa Fe frog).